The chain runs to 804 residues: Phenylalanine--tRNA ligase beta subunit (804 aa).

One can recognise a tRNA-binding domain in the interval 39 to 147 (GPSFSNVVVA…PNLPLGEDLA (109 aa)). Residues 402-480 (ETVGEIHLRC…RIHGYDNIPV (79 aa)) enclose the B5 domain. The Mg(2+) site is built by Asp-458, Asp-464, Glu-467, and Glu-468. One can recognise an FDX-ACB domain in the interval 711–804 (SRYPESSRDV…IIDQTGARVR (94 aa)).

It belongs to the phenylalanyl-tRNA synthetase beta subunit family. Type 1 subfamily. Tetramer of two alpha and two beta subunits. Mg(2+) is required as a cofactor.

Its subcellular location is the cytoplasm. The enzyme catalyses tRNA(Phe) + L-phenylalanine + ATP = L-phenylalanyl-tRNA(Phe) + AMP + diphosphate + H(+). The chain is Phenylalanine--tRNA ligase beta subunit from Syntrophus aciditrophicus (strain SB).